Reading from the N-terminus, the 196-residue chain is Homeobox protein ANF-1 (196 aa).

The homeobox DNA-binding region spans glycine 119–histidine 178.

The protein belongs to the ANF homeobox family.

It localises to the nucleus. May be involved in the early patterning of the most anterior region of the main embryonic body axis. The chain is Homeobox protein ANF-1 from Gallus gallus (Chicken).